We begin with the raw amino-acid sequence, 190 residues long: Spermatogenesis-associated protein 12 (190 aa).

Expressed in testis.

This Homo sapiens (Human) protein is Spermatogenesis-associated protein 12 (SPATA12).